Here is a 322-residue protein sequence, read N- to C-terminus: Acetylglutamate kinase (322 aa).

Residues 89 to 90 (GG), R111, and N217 contribute to the substrate site.

This sequence belongs to the acetylglutamate kinase family. ArgB subfamily.

It is found in the cytoplasm. The enzyme catalyses N-acetyl-L-glutamate + ATP = N-acetyl-L-glutamyl 5-phosphate + ADP. The protein operates within amino-acid biosynthesis; L-arginine biosynthesis; N(2)-acetyl-L-ornithine from L-glutamate: step 2/4. Its function is as follows. Catalyzes the ATP-dependent phosphorylation of N-acetyl-L-glutamate. The sequence is that of Acetylglutamate kinase from Ehrlichia ruminantium (strain Welgevonden).